The sequence spans 622 residues: Procollagen galactosyltransferase 1 (622 aa).

Positions 1 to 29 (MAAAPRAGRRRGQPLLALLLLLLAPLPPG) are cleaved as a signal peptide. N-linked (GlcNAc...) asparagine glycosylation is found at N96, N184, and N381. The span at 588 to 606 (RAKSQKMREQQALSREAKN) shows a compositional bias: basic and acidic residues. The tract at residues 588-622 (RAKSQKMREQQALSREAKNSDVLQSPLDSAARDEL) is disordered. The Endoplasmic reticulum retention motif signature appears at 619–622 (RDEL).

The protein belongs to the glycosyltransferase 25 family. Post-translationally, N-glycosylated. Ubiquitous with higher levels in placenta, heart, lung and spleen.

It is found in the endoplasmic reticulum lumen. The enzyme catalyses (5R)-5-hydroxy-L-lysyl-[collagen] + UDP-alpha-D-galactose = (5R)-5-O-(beta-D-galactosyl)-5-hydroxy-L-lysyl-[collagen] + UDP + H(+). Functionally, beta-galactosyltransferase that transfers beta-galactose to hydroxylysine residues of type I collagen. By acting on collagen glycosylation, facilitates the formation of collagen triple helix. Also involved in the biosynthesis of collagen type IV. In Homo sapiens (Human), this protein is Procollagen galactosyltransferase 1 (COLGALT1).